Here is a 179-residue protein sequence, read N- to C-terminus: Apolipophorin-3b (179 aa).

Positions 1–16 (MNTLLAVLMLAVAAQA) are cleaved as a signal peptide. Repeats lie at residues 30 to 40 (VQQLNHTIVNA), 41 to 52 (AHELHETLGLPT), 53 to 60 (PDEALNLL), 61 to 78 (TEQA…TTSL), 79 to 89 (KQEAEKHQGSV), 90 to 99 (AEQLNRFARN), 100 to 113 (LNNS…SAQP), 114 to 127 (ADQL…LTNV), 128 to 140 (GHQW…RPSV), 141 to 151 (AQEAWAPVQSA), 152 to 165 (LQEA…AAAN), and 166 to 179 (LQNS…KPAN). Residue asparagine 34 is glycosylated (N-linked (GlcNAc...) asparagine). N-linked (GlcNAc...) asparagine glycosylation occurs at asparagine 101. The tract at residues 152–179 (LQEAAEKTKEAAANLQNSIQSAVQKPAN) is disordered. Polar residues predominate over residues 165 to 179 (NLQNSIQSAVQKPAN).

This sequence belongs to the insect apolipophorin-3 family. Equilibrium between a soluble monomer and a bound lipoprotein form. Apolipophorin-3 associates with lipophorin during lipid loading until each particle contains 14 molecules of apolipophorin-3 in L.migratoria (5 molecules of apolipophorin-3a and 9 of apolipophorin-3b). In terms of tissue distribution, hemolymph.

The protein resides in the secreted. Its function is as follows. Assists in the loading of diacylglycerol, generated from triacylglycerol stores in the fat body through the action of adipokinetic hormone, into lipophorin, the hemolymph lipoprotein. It increases the lipid carrying capacity of lipophorin by covering the expanding hydrophobic surface resulting from diacylglycerol uptake. It thus plays a critical role in the transport of lipids during flight in several species of insects. The sequence is that of Apolipophorin-3b from Locusta migratoria (Migratory locust).